Consider the following 300-residue polypeptide: ClpXP adapter protein SpxH (300 aa).

Belongs to the SpxH family. In terms of assembly, interacts with Spx.

The protein resides in the cytoplasm. Functionally, adapter protein required for efficient degradation of Spx by ClpXP under non-stress conditions. Interaction with Spx stabilizes Spx and exposes the C-terminus of Spx for recognition and proteolysis by ClpXP. This Bacillus licheniformis (strain ATCC 14580 / DSM 13 / JCM 2505 / CCUG 7422 / NBRC 12200 / NCIMB 9375 / NCTC 10341 / NRRL NRS-1264 / Gibson 46) protein is ClpXP adapter protein SpxH.